Reading from the N-terminus, the 429-residue chain is Septin-8 (429 aa).

A compositionally biased stretch (basic and acidic residues) spans 1–16; the sequence is MAATDLERVSNAEPEP. Positions 1 to 23 are disordered; the sequence is MAATDLERVSNAEPEPRSLSLGG. Ala2 bears the N-acetylalanine mark. The residue at position 10 (Ser10) is a Phosphoserine. A Septin-type G domain is found at 41-307; that stretch reads QGFSFNILCV…ELYRRCKLEE (267 aa). Residues 51-58 are G1 motif; sequence GETGIGKS. Residues 51–58, Gly106, 187–195, Gly241, and Arg256 each bind GTP; these read GETGIGKS and KADTISKSE. Positions 103 to 106 are G3 motif; that stretch reads DAVG. Residues 186-189 are G4 motif; the sequence is AKAD. Residues 320–412 are a coiled coil; that stretch reads FSLQETYEAK…AAMEALQSQA (93 aa). A compositionally biased stretch (polar residues) spans 409–420; that stretch reads QSQALHATSQQP. Residues 409 to 429 are disordered; that stretch reads QSQALHATSQQPLRKDKDKKN.

The protein belongs to the TRAFAC class TrmE-Era-EngA-EngB-Septin-like GTPase superfamily. Septin GTPase family. As to quaternary structure, septins polymerize into heterooligomeric protein complexes that form filaments, and can associate with cellular membranes, actin filaments and microtubules. GTPase activity is required for filament formation. Interacts with SEPTIN5. Interacts with CDK14, SEPTIN4 and SEPTIN7. Interacts with VAMP2; the interaction inhibits interaction of VAMP2 with SYP. Interacts with STX1A.

Its subcellular location is the cytoplasm. The protein resides in the cytoskeleton. The protein localises to the synapse. It localises to the cell projection. It is found in the axon. Its subcellular location is the cytoplasmic vesicle. The protein resides in the secretory vesicle. The protein localises to the synaptic vesicle membrane. It localises to the presynapse. Its function is as follows. Filament-forming cytoskeletal GTPase. May play a role in platelet secretion. Seems to participate in the process of SNARE complex formation in synaptic vesicles. The sequence is that of Septin-8 from Mus musculus (Mouse).